The chain runs to 874 residues: Alanine--tRNA ligase (874 aa).

Residues His563, His567, Cys665, and His669 each coordinate Zn(2+).

Belongs to the class-II aminoacyl-tRNA synthetase family. It depends on Zn(2+) as a cofactor.

The protein resides in the cytoplasm. The enzyme catalyses tRNA(Ala) + L-alanine + ATP = L-alanyl-tRNA(Ala) + AMP + diphosphate. Functionally, catalyzes the attachment of alanine to tRNA(Ala) in a two-step reaction: alanine is first activated by ATP to form Ala-AMP and then transferred to the acceptor end of tRNA(Ala). Also edits incorrectly charged Ser-tRNA(Ala) and Gly-tRNA(Ala) via its editing domain. This Actinobacillus pleuropneumoniae serotype 7 (strain AP76) protein is Alanine--tRNA ligase.